A 278-amino-acid polypeptide reads, in one-letter code: Phosphatidylglycerol--prolipoprotein diacylglyceryl transferase (278 aa).

The next 4 helical transmembrane spans lie at 19–39 (WYGI…INEG), 49–69 (FIDF…IYYV), 86–106 (IWNG…VLLI), and 112–132 (MLPP…AQVI). R134 contacts a 1,2-diacyl-sn-glycero-3-phospho-(1'-sn-glycerol). Helical transmembrane passes span 174–194 (QPTY…ILSL), 204–224 (GEIF…VEGM), and 235–255 (IRVS…LWIY).

This sequence belongs to the Lgt family.

The protein localises to the cell membrane. The enzyme catalyses L-cysteinyl-[prolipoprotein] + a 1,2-diacyl-sn-glycero-3-phospho-(1'-sn-glycerol) = an S-1,2-diacyl-sn-glyceryl-L-cysteinyl-[prolipoprotein] + sn-glycerol 1-phosphate + H(+). It functions in the pathway protein modification; lipoprotein biosynthesis (diacylglyceryl transfer). In terms of biological role, catalyzes the transfer of the diacylglyceryl group from phosphatidylglycerol to the sulfhydryl group of the N-terminal cysteine of a prolipoprotein, the first step in the formation of mature lipoproteins. The sequence is that of Phosphatidylglycerol--prolipoprotein diacylglyceryl transferase from Lactobacillus johnsonii (strain CNCM I-12250 / La1 / NCC 533).